Reading from the N-terminus, the 776-residue chain is Rho guanine nucleotide exchange factor 6 (776 aa).

Positions 1-111 (MNPEEQIVTW…TLLAVNKATE (111 aa)) constitute a Calponin-homology (CH) domain. Positions 115–151 (SERPCGRSSSLSAANTSQTNPQGAVSSTVSGLQRQSK) are disordered. Positions 121 to 151 (RSSSLSAANTSQTNPQGAVSSTVSGLQRQSK) are enriched in polar residues. Residue S126 is modified to Phosphoserine. A Phosphothreonine modification is found at T133. Phosphoserine occurs at positions 144 and 150. The SH3 domain maps to 160-219 (SHQLIVKARFNFKQTNEDELSVCKGDIIYVTRVEEGGWWEGTLNGRTGWFPSNYVREIKS). S225 carries the phosphoserine modification. Residues 241–421 (YYTVVLQNIL…KTLMGQCQDL (181 aa)) form the DH domain. Residues 443 to 548 (DIKNLGNVIF…WLEQLNRLIR (106 aa)) form the PH domain. S488 bears the Phosphoserine mark. Low complexity predominate over residues 561–572 (SSSCSAHSSFSS). A disordered region spans residues 561-581 (SSSCSAHSSFSSTGQPRGPLE). 2 positions are modified to phosphoserine: S640 and S684.

Interacts with PAK kinases through the SH3 domain. Interacts with GIT1. Component of cytoplasmic complexes, which also contain PXN, GIT1 and PAK1. Interacts with PARVB. Interacts with BIN2. Identified in a complex with BIN2 and GIT2. Interacts with PARVG; the guanine nucleotide exchange factor activity of ARHGEF6 is essential for PARVG-induced enhancement of cell spreading. Ubiquitous.

The protein localises to the cell projection. The protein resides in the lamellipodium. Functionally, acts as a RAC1 guanine nucleotide exchange factor (GEF). This is Rho guanine nucleotide exchange factor 6 (ARHGEF6) from Homo sapiens (Human).